Reading from the N-terminus, the 1001-residue chain is Sarcoplasmic/endoplasmic reticulum calcium ATPase 1 (1001 aa).

Topologically, residues 1 to 48 (MEAAHSKSTEECLAYFGVSETTGLTPDQVKRHLEKYGHNELPAEEGKS) are cytoplasmic. The chain crosses the membrane as a helical span at residues 49-69 (LWELVIEQFEDLLVRILLLAA). Residues 70–89 (CISFVLAWFEEGEETITAFV) lie on the Lumenal side of the membrane. The chain crosses the membrane as a helical span at residues 90–110 (EPFVILLILIANAIVGVWQER). Residues 111–253 (NAENAIEALK…QDKTPLQQKL (143 aa)) are Cytoplasmic-facing. A helical transmembrane segment spans residues 254 to 273 (DEFGEQLSKVISLICVAVWL). The Lumenal segment spans residues 274–295 (INIGHFNDPVHGGSWIRGAIYY). Residues 296–313 (FKIAVALAVAAIPEGLPA) traverse the membrane as a helical segment. Ca(2+) is bound by residues Val304, Ala305, Ile307, and Glu309. Residues 314-757 (VITTCLALGT…EEGRAIYNNM (444 aa)) lie on the Cytoplasmic side of the membrane. Asp351 functions as the 4-aspartylphosphate intermediate in the catalytic mechanism. Mg(2+) contacts are provided by Asp351 and Thr353. Position 353 (Thr353) interacts with ATP. Position 441 is a phosphothreonine (Thr441). ATP-binding residues include Glu442, Arg489, Lys515, and Arg560. Thr569 carries the post-translational modification Phosphothreonine. Ser581 is modified (phosphoserine). ATP is bound by residues Thr625, Gly626, Asp627, Arg678, and Lys684. Asp703 contributes to the Mg(2+) binding site. An ATP-binding site is contributed by Asn706. Residues 758-777 (KQFIRYLISSNVGEVVCIFL) traverse the membrane as a helical segment. Positions 768 and 771 each coordinate Ca(2+). Topologically, residues 778 to 787 (TAALGLPEAL) are lumenal. The chain crosses the membrane as a helical span at residues 788-808 (IPVQLLWVNLVTDGLPATALG). An interaction with PLN region spans residues 788-808 (IPVQLLWVNLVTDGLPATALG). 3 residues coordinate Ca(2+): Asn796, Thr799, and Asp800. Residues 809–828 (FNPPDLDIMDRPPRSPKEPL) are Cytoplasmic-facing. Residues 829-851 (ISGWLFFRYMAIGGYVGAATVGA) form a helical membrane-spanning segment. The Lumenal portion of the chain corresponds to 852–897 (AAWWFMYAEDGPGVTYHQLTHFMQCTEDHPHFEGLDCEIFEAPEPM). Cys876 and Cys888 are oxidised to a cystine. A helical membrane pass occupies residues 898–917 (TMALSVLVTIEMCNALNSLS). Residue Glu908 participates in Ca(2+) binding. The Cytoplasmic portion of the chain corresponds to 918-930 (ENQSLMRMPPWVN). A helical membrane pass occupies residues 931–949 (IWLLGSICLSMSLHFLILY). The segment at 932–943 (WLLGSICLSMSL) is interaction with PLN. At 950–964 (VDPLPMIFKLKALDL) the chain is on the lumenal side. A helical transmembrane segment spans residues 965–985 (TQWLMVLKISLPVIGLDEILK). At 986–1001 (FIARNYLEDPEDERRK) the chain is on the cytoplasmic side.

Belongs to the cation transport ATPase (P-type) (TC 3.A.3) family. Type IIA subfamily. As to quaternary structure, interacts with sarcolipin (SLN). Interacts with phospholamban (PLN). Interacts with myoregulin (MRLN). Interacts with DWORF. Interacts with VMP1. Requires Mg(2+) as cofactor. Skeletal muscle (at protein level). Skeletal muscle, fast twitch muscle (type II) fibers.

The protein localises to the endoplasmic reticulum membrane. It is found in the sarcoplasmic reticulum membrane. The enzyme catalyses Ca(2+)(in) + ATP + H2O = Ca(2+)(out) + ADP + phosphate + H(+). Its activity is regulated as follows. Inhibited by sarcolipin (SLN) and myoregulin (MRLN). Has also been shown to be reversibly inhibited by phospholamban (PLN) at low calcium concentrations in vitro. Dephosphorylated PLN decreases the apparent affinity of the ATPase for calcium and this inhibition is regulated by the phosphorylation of PLN in vitro. Enhanced by DWORF; DWORF increases activity by displacing sarcolipin (SLN), phospholamban (PLN) and myoregulin (MRLN). Key regulator of striated muscle performance by acting as the major Ca(2+) ATPase responsible for the reuptake of cytosolic Ca(2+) into the sarcoplasmic reticulum. Catalyzes the hydrolysis of ATP coupled with the translocation of calcium from the cytosol to the sarcoplasmic reticulum lumen. Contributes to calcium sequestration involved in muscular excitation/contraction. The polypeptide is Sarcoplasmic/endoplasmic reticulum calcium ATPase 1 (ATP2A1) (Oryctolagus cuniculus (Rabbit)).